We begin with the raw amino-acid sequence, 330 residues long: Aspartate--ammonia ligase (330 aa).

It belongs to the class-II aminoacyl-tRNA synthetase family. AsnA subfamily.

The protein localises to the cytoplasm. It carries out the reaction L-aspartate + NH4(+) + ATP = L-asparagine + AMP + diphosphate + H(+). It participates in amino-acid biosynthesis; L-asparagine biosynthesis; L-asparagine from L-aspartate (ammonia route): step 1/1. The sequence is that of Aspartate--ammonia ligase from Streptococcus thermophilus (strain ATCC BAA-250 / LMG 18311).